The chain runs to 146 residues: MPKYYCDYCDTYLTHDSPSVRKTHCTGRKHRDNVKFYYQKWMEEQAQHLIDATTAAFKAGKITNNPFAGGPSSAPPKPSGVSIPPPNMGAPPRPGMPGMPFMPPMMNPMMTGMRPPPIMNPMAMMGPPPPLGTIPGVRPPIMNGPK.

Residues 4 to 36 form a Matrin-type zinc finger; it reads YYCDYCDTYLTHDSPSVRKTHCTGRKHRDNVKF. Positions 64-96 are disordered; sequence NNPFAGGPSSAPPKPSGVSIPPPNMGAPPRPGM. The segment covering 73–96 has biased composition (pro residues); it reads SAPPKPSGVSIPPPNMGAPPRPGM.

The protein belongs to the U1 small nuclear ribonucleoprotein C family. U1 snRNP is composed of the 7 core Sm proteins B/B', D1, D2, D3, E, F and G that assemble in a heptameric protein ring on the Sm site of the small nuclear RNA to form the core snRNP, and at least 3 U1 snRNP-specific proteins U1-70K, U1-A and U1-C. U1-C interacts with U1 snRNA and the 5' splice-site region of the pre-mRNA.

The protein resides in the nucleus. In terms of biological role, component of the spliceosomal U1 snRNP, which is essential for recognition of the pre-mRNA 5' splice-site and the subsequent assembly of the spliceosome. U1-C is directly involved in initial 5' splice-site recognition for both constitutive and regulated alternative splicing. The interaction with the 5' splice-site seems to precede base-pairing between the pre-mRNA and the U1 snRNA. Stimulates commitment or early (E) complex formation by stabilizing the base pairing of the 5' end of the U1 snRNA and the 5' splice-site region. In Drosophila pseudoobscura pseudoobscura (Fruit fly), this protein is U1 small nuclear ribonucleoprotein C.